A 290-amino-acid chain; its full sequence is Signal peptidase I (290 aa).

The Cytoplasmic segment spans residues 1–13 (MKFLRSVYAFCSS). Residues 14–34 (WVGTIVIVLLVIFFIAQAFII) traverse the membrane as a helical segment. The Extracellular portion of the chain corresponds to 35-290 (PSRSMVGTLY…KIIKKENATH (256 aa)). Residues Ser-38 and Lys-106 contribute to the active site.

It belongs to the peptidase S26 family.

Its subcellular location is the cell membrane. The catalysed reaction is Cleavage of hydrophobic, N-terminal signal or leader sequences from secreted and periplasmic proteins.. The protein is Signal peptidase I (lepB) of Helicobacter pylori (strain ATCC 700392 / 26695) (Campylobacter pylori).